The sequence spans 222 residues: ATP-dependent Clp protease proteolytic subunit 1 (222 aa).

The active-site Nucleophile is Ser121. His146 is a catalytic residue.

This sequence belongs to the peptidase S14 family. Fourteen ClpP subunits assemble into 2 heptameric rings which stack back to back to give a disk-like structure with a central cavity, resembling the structure of eukaryotic proteasomes.

Its subcellular location is the cytoplasm. The enzyme catalyses Hydrolysis of proteins to small peptides in the presence of ATP and magnesium. alpha-casein is the usual test substrate. In the absence of ATP, only oligopeptides shorter than five residues are hydrolyzed (such as succinyl-Leu-Tyr-|-NHMec, and Leu-Tyr-Leu-|-Tyr-Trp, in which cleavage of the -Tyr-|-Leu- and -Tyr-|-Trp bonds also occurs).. Functionally, cleaves peptides in various proteins in a process that requires ATP hydrolysis. Has a chymotrypsin-like activity. Plays a major role in the degradation of misfolded proteins. In Thermobifida fusca (strain YX), this protein is ATP-dependent Clp protease proteolytic subunit 1.